The primary structure comprises 518 residues: Maturase K (518 aa).

It belongs to the intron maturase 2 family. MatK subfamily.

It localises to the plastid. Its subcellular location is the chloroplast. In terms of biological role, usually encoded in the trnK tRNA gene intron. Probably assists in splicing its own and other chloroplast group II introns. This is Maturase K from Syzygium cumini (Java plum).